A 1027-amino-acid chain; its full sequence is MMWLSWKLFLFLSLIGCLSESVDYGPVFVQEPDDVIFPTDSEEKKVSLNCQAHGSPTPTYRWLRNGTEIDVESDYRYSLIEGSLIISNPNEMKDSGQYQCLTTNMFGSILSREAVLQFAYLGNFSGRTRSAVSVREGQGVVLMCSPPLHSPEIIYSWVFNEFPSFVAEDSRRFISQETGNLYISKVQTSDVGSYICLVKNTVTNARVLSPPTPLTLRNDGVMGEYEPKIEVHFPYTVTAARGTTVKMECFALGNPVPTISWKKVNGHNPSKARLRKSQAVLEIPNVQLEDAGMYECKAENSRGRNVFRGQLQVYTYPQWVEKLNDTELDSGEQLRWECKATGKPRPTYRWLKNGVPLWPQSRIEMINSVLMIRTVNISDAGMYQCLAENKYGTIYASAELKILASAPTFPLNQMRKTIIITKGQEVVIECKPQASPKPTITWKKGDKALRESKRVTILPQGSLRILNASKSDEGRYSCRGVNVFGSAEIVASVSVKEPTRIELTPKKIELTVGESIVLSCKALHDSTLDVTFYWTLNGQPIDFDKEDGHFESIKAQASSADLMIRNILLMHAGRYGCRVQTAADAVSDETELLVRGPPGPPGVVIVEEITDTTATLSWSPGADNHSPISLYNLQARSPFSLGWQTVKTVPDVISGDMESAMAVELNPWVEYEFRVVATNKIGTGDPSAPSRMIRTNEAVPKTPPANVSGRSGRRHELVIAWEPVSEEFQNGEGFGYIVAFRPNGTRGWKEKMVTSSDASKFIYRDESVPPLTPFEVKVGVYNNKGDGPFSPIVVICSAEGEPTAAPIDVKATSLSVSEILVAWKHIKESLGRPQGFEIGYWKDMEQEEAAEKVKTAGNESSLLLTGLEGNTLYHLTVRAYNAAGYGPPSTAVRVATKKSPPSQAPSNVMWIQDGSHVSLGWEPVRPLANESEVMGYKVLLRQEGQSNSQVIETQKTSAVVILPDVGVYIIEVCAVSEGGDGTASPQIRVPSYAGGKVTSAQSTLHMFSTSSSSVTLLLVLMVPSTSW.

Positions 1–19 (MMWLSWKLFLFLSLIGCLS) are cleaved as a signal peptide. Ig-like C2-type domains lie at 32-117 (PDDV…AVLQ), 123-209 (NFSG…RVLS), 227-307 (PKIE…RNVF), 317-401 (PQWV…AELK), 407-494 (PTFP…ASVS), and 498-593 (PTRI…TELL). A disulfide bridge links Cys50 with Cys100. Residues Asn65 and Asn123 are each glycosylated (N-linked (GlcNAc...) asparagine). Intrachain disulfides connect Cys144-Cys196 and Cys249-Cys296. N-linked (GlcNAc...) asparagine glycans are attached at residues Asn324, Asn376, and Asn467. 3 cysteine pairs are disulfide-bonded: Cys338-Cys385, Cys430-Cys478, and Cys520-Cys577. Fibronectin type-III domains lie at 600 to 698 (PPGV…TNEA), 703 to 800 (PPAN…SAEG), 805 to 899 (APID…TKKS), and 901 to 994 (PSQA…SYAG). Asn706, Asn743, Asn858, and Asn929 each carry an N-linked (GlcNAc...) asparagine glycan. A lipid anchor (GPI-anchor amidated serine) is attached at Ser999. A propeptide spans 1000–1027 (AQSTLHMFSTSSSSVTLLLVLMVPSTSW) (removed in mature form).

It belongs to the immunoglobulin superfamily. Contactin family. As to quaternary structure, interacts with INgCAM/L1 and the tenascin-R TNP protein. Does not interacts with NrCAM. Expressed by subpopulations of Purkinje cells in the cerebellum. Also expressed by one type of Purkinje cell afferents, the climbing fibers.

The protein resides in the cell membrane. Its function is as follows. Contactins mediate cell surface interactions during nervous system development. May contribute to the formation of somatotopic maps of cerebellar afferents during the development of the nervous system. In Gallus gallus (Chicken), this protein is Contactin-5 (CNTN5).